A 1102-amino-acid polypeptide reads, in one-letter code: Carbamoyl phosphate synthase large chain (1102 aa).

The segment at 1 to 408 (MPKRTDIQSV…AFQKALRSLE (408 aa)) is carboxyphosphate synthetic domain. 12 residues coordinate ATP: Arg-129, Arg-175, Gly-181, Gly-182, Glu-214, Ile-216, Glu-221, Gly-247, Val-248, His-249, Gln-291, and Glu-305. The region spanning 137-334 (EEVRKKIGHG…IAKIAAKLAV (198 aa)) is the ATP-grasp 1 domain. 3 residues coordinate Mg(2+): Gln-291, Glu-305, and Asn-307. The Mn(2+) site is built by Gln-291, Glu-305, and Asn-307. The oligomerization domain stretch occupies residues 409–551 (KKGSQFTFVG…YFYSSYDEES (143 aa)). Positions 552–954 (EVAPREKPAV…AYAKSQAGAY (403 aa)) are carbamoyl phosphate synthetic domain. The region spanning 682–873 (GRVLAEAGLP…LAKAAARISL (192 aa)) is the ATP-grasp 2 domain. Arg-718, Arg-757, Leu-759, Glu-764, Gly-789, Ile-790, His-791, Ser-792, Gln-832, and Glu-844 together coordinate ATP. Residues Gln-832, Glu-844, and Asn-846 each contribute to the Mg(2+) site. Residues Gln-832, Glu-844, and Asn-846 each contribute to the Mn(2+) site. In terms of domain architecture, MGS-like spans 955–1100 (GPLPTKGRAF…QEHAAFLIAA (146 aa)). The segment at 955 to 1102 (GPLPTKGRAF…HAAFLIAARD (148 aa)) is allosteric domain.

Belongs to the CarB family. As to quaternary structure, composed of two chains; the small (or glutamine) chain promotes the hydrolysis of glutamine to ammonia, which is used by the large (or ammonia) chain to synthesize carbamoyl phosphate. Tetramer of heterodimers (alpha,beta)4. Requires Mg(2+) as cofactor. Mn(2+) serves as cofactor.

The enzyme catalyses hydrogencarbonate + L-glutamine + 2 ATP + H2O = carbamoyl phosphate + L-glutamate + 2 ADP + phosphate + 2 H(+). It carries out the reaction hydrogencarbonate + NH4(+) + 2 ATP = carbamoyl phosphate + 2 ADP + phosphate + 2 H(+). It functions in the pathway amino-acid biosynthesis; L-arginine biosynthesis; carbamoyl phosphate from bicarbonate: step 1/1. The protein operates within pyrimidine metabolism; UMP biosynthesis via de novo pathway; (S)-dihydroorotate from bicarbonate: step 1/3. Functionally, large subunit of the glutamine-dependent carbamoyl phosphate synthetase (CPSase). CPSase catalyzes the formation of carbamoyl phosphate from the ammonia moiety of glutamine, carbonate, and phosphate donated by ATP, constituting the first step of 2 biosynthetic pathways, one leading to arginine and/or urea and the other to pyrimidine nucleotides. The large subunit (synthetase) binds the substrates ammonia (free or transferred from glutamine from the small subunit), hydrogencarbonate and ATP and carries out an ATP-coupled ligase reaction, activating hydrogencarbonate by forming carboxy phosphate which reacts with ammonia to form carbamoyl phosphate. The chain is Carbamoyl phosphate synthase large chain from Streptomyces coelicolor (strain ATCC BAA-471 / A3(2) / M145).